Consider the following 311-residue polypeptide: 4-hydroxy-tetrahydrodipicolinate synthase (311 aa).

Position 51 (T51) interacts with pyruvate. Y140 functions as the Proton donor/acceptor in the catalytic mechanism. K168 acts as the Schiff-base intermediate with substrate in catalysis. I209 is a pyruvate binding site.

Belongs to the DapA family. Homotetramer; dimer of dimers.

The protein localises to the cytoplasm. The catalysed reaction is L-aspartate 4-semialdehyde + pyruvate = (2S,4S)-4-hydroxy-2,3,4,5-tetrahydrodipicolinate + H2O + H(+). Its pathway is amino-acid biosynthesis; L-lysine biosynthesis via DAP pathway; (S)-tetrahydrodipicolinate from L-aspartate: step 3/4. Functionally, catalyzes the condensation of (S)-aspartate-beta-semialdehyde [(S)-ASA] and pyruvate to 4-hydroxy-tetrahydrodipicolinate (HTPA). In Streptococcus suis (strain 98HAH33), this protein is 4-hydroxy-tetrahydrodipicolinate synthase.